The primary structure comprises 510 residues: Cytochrome P450 monooxygenase penQ (510 aa).

The helical transmembrane segment at 9 to 26 (WIVTLIVAATTYCTLRWV) threads the bilayer. 2 N-linked (GlcNAc...) asparagine glycosylation sites follow: asparagine 148 and asparagine 341. Cysteine 448 provides a ligand contact to heme. Residue asparagine 482 is glycosylated (N-linked (GlcNAc...) asparagine).

It belongs to the cytochrome P450 family. It depends on heme as a cofactor.

The protein localises to the membrane. Its pathway is secondary metabolite biosynthesis. Its function is as follows. Cytochrome P450 monooxygenase; part of the gene cluster that mediates the biosynthesis of the indole diterpenes penitrems. The geranylgeranyl diphosphate (GGPP) synthase penG catalyzes the first step in penitrem biosynthesis via conversion of farnesyl pyrophosphate and isopentyl pyrophosphate into geranylgeranyl pyrophosphate (GGPP). Condensation of indole-3-glycerol phosphate with GGPP by the prenyl transferase penC then forms 3-geranylgeranylindole (3-GGI). Epoxidation by the FAD-dependent monooxygenase penM leads to a epoxidized-GGI that is substrate of the terpene cyclase penB for cyclization to yield paspaline. Paspaline is subsequently converted to 13-desoxypaxilline by the cytochrome P450 monooxygenase penP, the latter being then converted to paxilline by the cytochrome P450 monooxygenase penQ. Paxilline is converted to beta-paxitriol via C-10 ketoreduction by the short-chain dehydrogenase PC-15 which can be monoprenylated at the C-20 by the indole diterpene prenyltransferase penD. A two-step elimination (acetylation and elimination) process performed by the O-acetyltransferase PC-16 and the P.simplicissimum ptmI-ortholog not yet identified in P.crustosum, leads to the production of the prenylated form of penijanthine. The FAD-linked oxidoreductase ptmO then converts the prenylated form of penijanthine into PC-M5 which is in turn transformed into PC-M4 by the aromatic dimethylallyltransferase PC-22. A series of oxidation steps involving 4 cytochrome P450 monooxygenases (PC-21, PC-05, PC-23, PC-20) and a FAD-dependent monooxygenase (PC-14) are required for the transformation of PC-M4 to penitrems A and E. Synthesis of these final products is proposed to proceed via penitrems D and C (PC-21, PC-05, PC-14) and penitrems B and F (PC-21, PC-05, PC-14, PC-23). The polypeptide is Cytochrome P450 monooxygenase penQ (Penicillium crustosum (Blue mold fungus)).